The sequence spans 117 residues: Hydrogenase maturation factor HypA (117 aa).

Position 2 (His2) interacts with Ni(2+). Zn(2+)-binding residues include Cys73, Cys76, Cys90, and Cys93.

The protein belongs to the HypA/HybF family.

In terms of biological role, involved in the maturation of [NiFe] hydrogenases. Required for nickel insertion into the metal center of the hydrogenase. This is Hydrogenase maturation factor HypA from Pectobacterium atrosepticum (strain SCRI 1043 / ATCC BAA-672) (Erwinia carotovora subsp. atroseptica).